A 546-amino-acid polypeptide reads, in one-letter code: Hexose oxidase (546 aa).

Residues 40–222 (IGTNIDFVYV…TKYYFKDLPM (183 aa)) enclose the FAD-binding PCMH-type domain. Residues 79-138 (HCYEDFVFDECVKAIINVTGLVESGYDDDRGYFVSSGDTNWGSFKTLFRDHGRVLPGGSC) constitute a cross-link (6-(S-cysteinyl)-8alpha-(pros-histidyl)-FAD (His-Cys)). Residues Asn-95 and Asn-358 are each glycosylated (N-linked (GlcNAc...) asparagine).

This sequence belongs to the oxygen-dependent FAD-linked oxidoreductase family. Homodimer. Requires FAD as cofactor. Cleaved into 40 kDa and 29 kDa cleavage products, but the 2 polypeptide chains do not separate and seem to be physically linked together. Post-translationally, the FAD cofactor is bound via a bicovalent 6-S-cysteinyl, 8alpha-N1-histidyl FAD linkage.

It catalyses the reaction beta-D-glucose + O2 = D-glucono-1,5-lactone + H2O2. The catalysed reaction is D-galactose + O2 = D-galactono-1,5-lactone + H2O2. The enzyme catalyses D-maltose + O2 = D-maltobiono-1,5-lactone + H2O2. It carries out the reaction D-cellobiose + O2 = D-cellobiono-1,5-lactone + H2O2. It catalyses the reaction beta-lactose + O2 = lactobiono-1,5-lactone + H2O2. Its function is as follows. Catalyzes the selective oxidation of C1 hydroxyl moieties on mono- and disaccharides with concomitant reduction of molecular oxygen to hydrogen peroxide. This results in the formation of the corresponding lactones, which typically undergo spontaneous hydrolysis. Hexose oxidase is able to oxidize a variety of substrates including D-glucose, D-galactose, maltose, cellobiose, and lactose. In Chondrus crispus (Carrageen Irish moss), this protein is Hexose oxidase (HOX).